A 256-amino-acid polypeptide reads, in one-letter code: Hemin import ATP-binding protein HmuV (256 aa).

In terms of domain architecture, ABC transporter spans 2–238; it reads ISAQNLVYSL…QALTMLYGAD (237 aa). 34–41 lines the ATP pocket; that stretch reads GPNGAGKS.

The protein belongs to the ABC transporter superfamily. Heme (hemin) importer (TC 3.A.1.14.5) family. As to quaternary structure, the complex is composed of two ATP-binding proteins (HmuV), two transmembrane proteins (HmuU) and a solute-binding protein (HmuT).

Its subcellular location is the cell inner membrane. Functionally, part of the ABC transporter complex HmuTUV involved in hemin import. Responsible for energy coupling to the transport system. The polypeptide is Hemin import ATP-binding protein HmuV (Escherichia coli O6:K15:H31 (strain 536 / UPEC)).